A 117-amino-acid chain; its full sequence is Large ribosomal subunit protein bL19 (117 aa).

This sequence belongs to the bacterial ribosomal protein bL19 family.

This protein is located at the 30S-50S ribosomal subunit interface and may play a role in the structure and function of the aminoacyl-tRNA binding site. This Shewanella baltica (strain OS155 / ATCC BAA-1091) protein is Large ribosomal subunit protein bL19.